Reading from the N-terminus, the 941-residue chain is Endoglucanase (941 aa).

The first 29 residues, 1 to 29 (MKIKQIKQSLSLLLIITLIMSLFVPMASA), serve as a signal peptide directing secretion. SLH domains follow at residues 37 to 94 (NAFP…GLEA), 95 to 158 (SSKD…LSLP), and 161 to 224 (QREY…DYLY). The active-site Proton donor is Glu373. Catalysis depends on Glu485, which acts as the Nucleophile.

The protein belongs to the glycosyl hydrolase 5 (cellulase A) family.

It catalyses the reaction Endohydrolysis of (1-&gt;4)-beta-D-glucosidic linkages in cellulose, lichenin and cereal beta-D-glucans.. The sequence is that of Endoglucanase from Bacillus sp. (strain KSM-635).